The chain runs to 306 residues: Homoserine O-acetyltransferase (306 aa).

Catalysis depends on Cys-142, which acts as the Acyl-thioester intermediate. Positions 163 and 194 each coordinate substrate. Catalysis depends on His-237, which acts as the Proton acceptor. Glu-239 is an active-site residue. Substrate is bound at residue Arg-251.

It belongs to the MetA family.

Its subcellular location is the cytoplasm. The catalysed reaction is L-homoserine + acetyl-CoA = O-acetyl-L-homoserine + CoA. It participates in amino-acid biosynthesis; L-methionine biosynthesis via de novo pathway; O-acetyl-L-homoserine from L-homoserine: step 1/1. Its function is as follows. Transfers an acetyl group from acetyl-CoA to L-homoserine, forming acetyl-L-homoserine. The chain is Homoserine O-acetyltransferase from Clostridium tetani (strain Massachusetts / E88).